Consider the following 78-residue polypeptide: UPF0349 protein BLi03401/BL03152 (78 aa).

Belongs to the UPF0349 family.

This Bacillus licheniformis (strain ATCC 14580 / DSM 13 / JCM 2505 / CCUG 7422 / NBRC 12200 / NCIMB 9375 / NCTC 10341 / NRRL NRS-1264 / Gibson 46) protein is UPF0349 protein BLi03401/BL03152.